Here is a 227-residue protein sequence, read N- to C-terminus: Large ribosomal subunit protein bL25 (227 aa).

This sequence belongs to the bacterial ribosomal protein bL25 family. CTC subfamily. In terms of assembly, part of the 50S ribosomal subunit; part of the 5S rRNA/L5/L18/L25 subcomplex. Contacts the 5S rRNA. Binds to the 5S rRNA independently of L5 and L18.

Its function is as follows. This is one of the proteins that binds to the 5S RNA in the ribosome where it forms part of the central protuberance. This chain is Large ribosomal subunit protein bL25, found in Polaromonas sp. (strain JS666 / ATCC BAA-500).